The chain runs to 141 residues: HTH-type transcriptional repressor NsrR (141 aa).

In terms of domain architecture, HTH rrf2-type spans 2-129 (QLTNFTDYGL…DNYTLADLVE (128 aa)). Positions 28–51 (ISEVTDVYGVSRNHMVKIINQLSR) form a DNA-binding region, H-T-H motif. [2Fe-2S] cluster is bound by residues C91, C96, and C102.

The cofactor is [2Fe-2S] cluster.

Its function is as follows. Nitric oxide-sensitive repressor of genes involved in protecting the cell against nitrosative stress. May require iron for activity. The polypeptide is HTH-type transcriptional repressor NsrR (Shigella boydii serotype 18 (strain CDC 3083-94 / BS512)).